The following is a 169-amino-acid chain: S-ribosylhomocysteine lyase (169 aa).

Positions 54, 58, and 128 each coordinate Fe cation.

The protein belongs to the LuxS family. As to quaternary structure, homodimer. It depends on Fe cation as a cofactor.

It carries out the reaction S-(5-deoxy-D-ribos-5-yl)-L-homocysteine = (S)-4,5-dihydroxypentane-2,3-dione + L-homocysteine. Involved in the synthesis of autoinducer 2 (AI-2) which is secreted by bacteria and is used to communicate both the cell density and the metabolic potential of the environment. The regulation of gene expression in response to changes in cell density is called quorum sensing. Catalyzes the transformation of S-ribosylhomocysteine (RHC) to homocysteine (HC) and 4,5-dihydroxy-2,3-pentadione (DPD). In Shewanella loihica (strain ATCC BAA-1088 / PV-4), this protein is S-ribosylhomocysteine lyase.